The following is a 315-amino-acid chain: DNA-directed RNA polymerase subunit alpha (315 aa).

Positions 1–228 (MLEIEKPKIE…EHFKLFMTLT (228 aa)) are alpha N-terminal domain (alpha-NTD). The tract at residues 245 to 315 (KEKVLEMTIE…LGLGLKKSDE (71 aa)) is alpha C-terminal domain (alpha-CTD).

It belongs to the RNA polymerase alpha chain family. In terms of assembly, homodimer. The RNAP catalytic core consists of 2 alpha, 1 beta, 1 beta' and 1 omega subunit. When a sigma factor is associated with the core the holoenzyme is formed, which can initiate transcription.

The catalysed reaction is RNA(n) + a ribonucleoside 5'-triphosphate = RNA(n+1) + diphosphate. DNA-dependent RNA polymerase catalyzes the transcription of DNA into RNA using the four ribonucleoside triphosphates as substrates. The chain is DNA-directed RNA polymerase subunit alpha from Clostridium novyi (strain NT).